Here is a 75-residue protein sequence, read N- to C-terminus: ORF2p protein (75 aa).

The segment at 13–18 (WIGHPV) is important for viral replication in intestinal cells. The segment at 23 to 45 (IVYLFVGFTPLTLETLHTLNYII) is a transmembrane helix. The tract at residues 53–75 (APRSPHSDPARMRIPTQPRKAPL) is disordered.

It is found in the host cytoplasmic vesicle membrane. Its function is as follows. Facilitates virus release from intestinal cells in vitro, possibly through the host autophagic pathway. The polypeptide is ORF2p protein (Human enterovirus 71 (strain USA/BrCr/1970) (EV71)).